We begin with the raw amino-acid sequence, 556 residues long: Potassium-transporting ATPase potassium-binding subunit (556 aa).

A run of 10 helical transmembrane segments spans residues 6-26 (AGIL…VPLG), 65-85 (SVLA…LLQG), 133-153 (GLSV…MAFV), 176-196 (LRIL…GGVI), 249-269 (PTTW…FSLP), 283-303 (AAIL…MMLF), 378-398 (GLYS…LMVG), 419-439 (YFLV…ALPG), 483-503 (ALGL…LALA), and 526-546 (FVGM…LPVL).

Belongs to the KdpA family. In terms of assembly, the system is composed of three essential subunits: KdpA, KdpB and KdpC.

The protein localises to the cell membrane. In terms of biological role, part of the high-affinity ATP-driven potassium transport (or Kdp) system, which catalyzes the hydrolysis of ATP coupled with the electrogenic transport of potassium into the cytoplasm. This subunit binds the extracellular potassium ions and delivers the ions to the membrane domain of KdpB through an intramembrane tunnel. This is Potassium-transporting ATPase potassium-binding subunit from Mycobacterium sp. (strain KMS).